The primary structure comprises 142 residues: Ribosome maturation factor RimP (142 aa).

The protein belongs to the RimP family.

The protein resides in the cytoplasm. Functionally, required for maturation of 30S ribosomal subunits. This Aromatoleum aromaticum (strain DSM 19018 / LMG 30748 / EbN1) (Azoarcus sp. (strain EbN1)) protein is Ribosome maturation factor RimP.